The following is a 205-amino-acid chain: UPF0637 protein OB1420 (205 aa).

This sequence belongs to the UPF0637 family.

The sequence is that of UPF0637 protein OB1420 from Oceanobacillus iheyensis (strain DSM 14371 / CIP 107618 / JCM 11309 / KCTC 3954 / HTE831).